A 325-amino-acid polypeptide reads, in one-letter code: Pyruvate dehydrogenase E1 component subunit beta (325 aa).

Glu60 provides a ligand contact to thiamine diphosphate.

Heterodimer of an alpha and a beta chain. Thiamine diphosphate serves as cofactor.

It carries out the reaction N(6)-[(R)-lipoyl]-L-lysyl-[protein] + pyruvate + H(+) = N(6)-[(R)-S(8)-acetyldihydrolipoyl]-L-lysyl-[protein] + CO2. In terms of biological role, the pyruvate dehydrogenase complex catalyzes the overall conversion of pyruvate to acetyl-CoA and CO(2). It contains multiple copies of three enzymatic components: pyruvate dehydrogenase (E1), dihydrolipoamide acetyltransferase (E2) and lipoamide dehydrogenase (E3). The chain is Pyruvate dehydrogenase E1 component subunit beta (pdhB) from Staphylococcus epidermidis (strain ATCC 35984 / DSM 28319 / BCRC 17069 / CCUG 31568 / BM 3577 / RP62A).